A 201-amino-acid chain; its full sequence is Adenylyl-sulfate kinase (201 aa).

Residue 35–42 participates in ATP binding; that stretch reads GLSGSGKS. The active-site Phosphoserine intermediate is the Ser-109.

This sequence belongs to the APS kinase family.

It catalyses the reaction adenosine 5'-phosphosulfate + ATP = 3'-phosphoadenylyl sulfate + ADP + H(+). Its pathway is sulfur metabolism; hydrogen sulfide biosynthesis; sulfite from sulfate: step 2/3. Functionally, catalyzes the synthesis of activated sulfate. This Escherichia coli O139:H28 (strain E24377A / ETEC) protein is Adenylyl-sulfate kinase.